A 547-amino-acid chain; its full sequence is Puff-specific protein Bx42 (547 aa).

Residues 177–343 (AQYIRYTPSQ…AREERAGLRN (167 aa)) are SNW. Phosphoserine occurs at positions 227 and 235. Disordered stretches follow at residues 333–398 (RARE…ERDI) and 486–547 (QFSG…SKRD). Composition is skewed to basic and acidic residues over residues 358–398 (EVRE…ERDI) and 526–539 (KRAE…SSHS).

It belongs to the SNW family.

Its subcellular location is the nucleus. May play a role in chromatin structure and function. The sequence is that of Puff-specific protein Bx42 (Bx42) from Drosophila melanogaster (Fruit fly).